Here is a 1080-residue protein sequence, read N- to C-terminus: Histone-lysine N-methyltransferase, H3 lysine-4 specific (1080 aa).

3 disordered regions span residues 1-46, 54-73, and 78-121; these read MSNY…SQYN, NDGTRRRYNDDRPHSSNNAS, and YATN…SSGS. The binds SWD2 stretch occupies residues 1–230; that stretch reads MSNYYRRAHA…THRKCRNSLI (230 aa). The segment covering 11–28 has biased composition (polar residues); the sequence is SSGSYRQPQEQPQYSRSG. The segment covering 29–46 has biased composition (low complexity); the sequence is HYQYSNGHSHQQYSSQYN. The segment covering 54-67 has biased composition (basic and acidic residues); that stretch reads NDGTRRRYNDDRPH. Polar residues-rich tracts occupy residues 78–87 and 99–121; these read YATNNSQSGP and RGMSQSRYSNSNVHNTLASSSGS. Residues 230–569 are binds RNA; sequence ILLPRISYDR…ALDHANFPEL (340 aa). Positions 356–569 are binds SHG1; it reads KKLQKLQENL…ALDHANFPEL (214 aa). Position 625 is a phosphoserine (Ser625). Residues 646–729 form a disordered region; the sequence is AHLLNEETDS…DQNGSSDVLD (84 aa). The span at 674-692 shows a compositional bias: acidic residues; that stretch reads DEEDENMTSSSSEEEEEEA. Basic and acidic residues predominate over residues 693–712; the sequence is PDKKFKSESEPTTPESDHLH. Positions 762 to 938 are binds SPP1; the sequence is MDLQNAIKDE…SLNQLNKRKK (177 aa). Positions 762–938 are contributes to RNA binding; that stretch reads MDLQNAIKDE…SLNQLNKRKK (177 aa). A required for catalytic activity region spans residues 762-938; it reads MDLQNAIKDE…SLNQLNKRKK (177 aa). At Thr875 the chain carries Phosphothreonine. 2 stretches are compositionally biased toward basic and acidic residues: residues 877 to 890 and 899 to 909; these read ELCQREESSNKEPS and SSRDNRASNRR. The interval 877–909 is disordered; the sequence is ELCQREESSNKEPSDSVPQEVSSSRDNRASNRR. Positions 904–909 match the RxxxRR motif motif; sequence RASNRR. In terms of domain architecture, SET spans 938–1055; that stretch reads KPVMFARSAI…ASEELTYDYK (118 aa). Tyr1054 is an S-adenosyl-L-methionine binding site. The Post-SET domain maps to 1064–1080; sequence ERLPCLCGAPNCKGFLN.

Belongs to the class V-like SAM-binding methyltransferase superfamily. In terms of assembly, component of the Set1C/COMPASS complex which consists of SET1(2), BRE2(2), SPP1(2), SDC1(1), SHG1(1), SWD1(1), SWD2(1), and SWD3(1). Interacts with MEC3.

The protein resides in the nucleus. The protein localises to the chromosome. The enzyme catalyses L-lysyl(4)-[histone H3] + 3 S-adenosyl-L-methionine = N(6),N(6),N(6)-trimethyl-L-lysyl(4)-[histone H3] + 3 S-adenosyl-L-homocysteine + 3 H(+). The catalysed reaction is N(6)-methyl-L-lysyl(4)-[histone H3] + S-adenosyl-L-methionine = N(6),N(6)-dimethyl-L-lysyl(4)-[histone H3] + S-adenosyl-L-homocysteine + H(+). It carries out the reaction N(6),N(6)-dimethyl-L-lysyl(4)-[histone H3] + S-adenosyl-L-methionine = N(6),N(6),N(6)-trimethyl-L-lysyl(4)-[histone H3] + S-adenosyl-L-homocysteine + H(+). Functionally, catalytic component of the COMPASS (Set1C) complex that specifically mono-, di- and trimethylates histone H3 to form H3K4me1/2/3. Binds RNAs involved in chromosome segregation, splicing and transcriptional regulation; appears to bind transcripts both co- and post-transcriptionally and binding might negatively affect its histone methyltransferase activity. COMPASS recognizes ubiquitinated H2B on one face of the nucleosome which stimulates the methylation of H3 on the opposing face. Plays a role in telomere length maintenance and transcription elongation regulation. This chain is Histone-lysine N-methyltransferase, H3 lysine-4 specific, found in Saccharomyces cerevisiae (strain ATCC 204508 / S288c) (Baker's yeast).